A 264-amino-acid chain; its full sequence is Proteasome subunit beta type-5 (264 aa).

The propeptide at 1–59 (MALASVLQRPMPVNQHGFFGLGGGADLLDLGPGSPGDGLSLAAPSWGVPEEPRIEMLHG) is removed in mature form. Catalysis depends on Thr-60, which acts as the Nucleophile. Residue Ala-108 coordinates bortezomib.

The protein belongs to the peptidase T1B family. The 26S proteasome consists of a 20S proteasome core and two 19S regulatory subunits. The 20S proteasome core is a barrel-shaped complex made of 28 subunits that are arranged in four stacked rings. The two outer rings are each formed by seven alpha subunits, and the two inner rings are formed by seven beta subunits. The proteolytic activity is exerted by three beta-subunits PSMB5, PSMB6 and PSMB7. Directly interacts with POMP. Interacts with ABCB1 and TAP1. As to expression, expressed in uterus at the embryo implantation site.

The protein resides in the cytoplasm. Its subcellular location is the nucleus. It carries out the reaction Cleavage of peptide bonds with very broad specificity.. Its function is as follows. Component of the 20S core proteasome complex involved in the proteolytic degradation of most intracellular proteins. This complex plays numerous essential roles within the cell by associating with different regulatory particles. Associated with two 19S regulatory particles, forms the 26S proteasome and thus participates in the ATP-dependent degradation of ubiquitinated proteins. The 26S proteasome plays a key role in the maintenance of protein homeostasis by removing misfolded or damaged proteins that could impair cellular functions, and by removing proteins whose functions are no longer required. Associated with the PA200 or PA28, the 20S proteasome mediates ubiquitin-independent protein degradation. This type of proteolysis is required in several pathways including spermatogenesis (20S-PA200 complex) or generation of a subset of MHC class I-presented antigenic peptides (20S-PA28 complex). Within the 20S core complex, PSMB5 displays a chymotrypsin-like activity. The sequence is that of Proteasome subunit beta type-5 (Psmb5) from Mus musculus (Mouse).